Reading from the N-terminus, the 934-residue chain is MQRYELIRLIGRGGMGEVYLAHDKACSRRVALKKIREDLSDNPLLRKRFLREAKIAADLIHPGIVPVYSICSDGESVYYTMPYIEGFSLKHLLKSVWQKEILSKELEEKTSVKAFLPIFDKICATVEYIHSKGVLHRDLKPDNILLGLFGEVVIVDWGAAIFKHAKELQQEKDEEGFSSYGQKNICYSSMTVPGKIVGTPDYMAPESLLGAEASEKTDIYALGLILYQMLTLSFPYRRKKGRKLPYEDSILSPIEMAPYREIPPSLSQIAMKAIAVDPVQRFSSVQELRKALQPHLQGESEWTTRDILSTKDRKNWKYYEPILLSRYFPVLASSPAQWYNFMLSDMEVNSSVRVECSVTKSSVQEGVGIFFPPSKEADKGEFYCGYGLWFSSQNNELSVSLIKNGIEIQKESQGIIPQQSRFAISIEKSNNKITVFVDQILFILHIDYLPSLGERIEIIIQDLQGISNITILESIGALRVSCLAVPDAFLAEKLYDQAARFYRKIRDSFPGRKESYEAQFRLGVTLLTQIEEQGGDLMQALSTFDLLHGSTGAPLEYLGKALVYQRNGSFVEEIRSLLLALKRYPQHPEIPRLKDHLCFRLYDSLHKHRSEALVFMLLILWIAPEKIGLREEERFLEFLHHRQQSTLFCRIDKTPLQFKSSKMELFLSFWTGFTLFLPELFQRARDLRDYQALIDIFYVVCASGNKEVFSQFAEDLAIFVDEVVFPKSLHNQRGEELVLFVQGLAALQNREYRQAKEFISAVPFALQLYALDLFSLQAFIDEEVKVFSDFLQDIYNSASAEDHKHVLVYMIQVSLWNQDLKQAYELLSKNFPQDKGLIEYSEAFVLWGCYLALTGDRSAVKAHFSRCQFKYGRSALIGKCIDDDSLDYLEGLVWWEKKKTLFQSYFLLRCLHAPKERYEVYRQAYISMENSFFG.

Residues 4-296 (YELIRLIGRG…ELRKALQPHL (293 aa)) enclose the Protein kinase domain. ATP contacts are provided by residues 10–18 (IGRGGMGEV) and Lys-33. Residue Asp-138 is the Proton acceptor of the active site.

The protein belongs to the protein kinase superfamily. Ser/Thr protein kinase family. Autophosphorylated on serine and threonine residues.

The enzyme catalyses L-seryl-[protein] + ATP = O-phospho-L-seryl-[protein] + ADP + H(+). It carries out the reaction L-threonyl-[protein] + ATP = O-phospho-L-threonyl-[protein] + ADP + H(+). Its function is as follows. Together with the serine/threonine kinase Pkn1, may play a role in the specific interactions with host proteins during intracellular growth. This is Serine/threonine-protein kinase PknD from Chlamydia muridarum (strain MoPn / Nigg).